The chain runs to 339 residues: Ketol-acid reductoisomerase (NADP(+)) (339 aa).

One can recognise a KARI N-terminal Rossmann domain in the interval 1 to 182; that stretch reads MRVYYDRDAD…GGGRSGIIET (182 aa). Residues 24–27, Arg48, Ser51, Ser53, and 83–86 contribute to the NADP(+) site; these read YGSQ and DELQ. The active site involves His108. Position 134 (Gly134) interacts with NADP(+). The KARI C-terminal knotted domain occupies 183–328; it reads TFREECETDL…GRLRAMMPWI (146 aa). Mg(2+) contacts are provided by Asp191, Glu195, Glu227, and Glu231. Ser252 provides a ligand contact to substrate.

Belongs to the ketol-acid reductoisomerase family. Requires Mg(2+) as cofactor.

The enzyme catalyses (2R)-2,3-dihydroxy-3-methylbutanoate + NADP(+) = (2S)-2-acetolactate + NADPH + H(+). It catalyses the reaction (2R,3R)-2,3-dihydroxy-3-methylpentanoate + NADP(+) = (S)-2-ethyl-2-hydroxy-3-oxobutanoate + NADPH + H(+). Its pathway is amino-acid biosynthesis; L-isoleucine biosynthesis; L-isoleucine from 2-oxobutanoate: step 2/4. It functions in the pathway amino-acid biosynthesis; L-valine biosynthesis; L-valine from pyruvate: step 2/4. Involved in the biosynthesis of branched-chain amino acids (BCAA). Catalyzes an alkyl-migration followed by a ketol-acid reduction of (S)-2-acetolactate (S2AL) to yield (R)-2,3-dihydroxy-isovalerate. In the isomerase reaction, S2AL is rearranged via a Mg-dependent methyl migration to produce 3-hydroxy-3-methyl-2-ketobutyrate (HMKB). In the reductase reaction, this 2-ketoacid undergoes a metal-dependent reduction by NADPH to yield (R)-2,3-dihydroxy-isovalerate. The sequence is that of Ketol-acid reductoisomerase (NADP(+)) from Rhodospirillum rubrum (strain ATCC 11170 / ATH 1.1.1 / DSM 467 / LMG 4362 / NCIMB 8255 / S1).